Reading from the N-terminus, the 222-residue chain is Glycerol-3-phosphate acyltransferase (222 aa).

Transmembrane regions (helical) follow at residues 4-24, 56-76, 87-107, 130-150, 153-173, and 174-191; these read ALLLCLCLLLITYLMGSIPTG, PAAIAVLAIDISKGVMAVALV, ALPAAWQNWLTLGVAIAVVLG, FMLNIWLALGTLATFLTVIFF, IVSLSSIVAAIAVNGIALALQ, and LPPPYLAFTFLAGMYVIV.

Belongs to the PlsY family. As to quaternary structure, probably interacts with PlsX.

The protein localises to the cell inner membrane. The catalysed reaction is an acyl phosphate + sn-glycerol 3-phosphate = a 1-acyl-sn-glycero-3-phosphate + phosphate. It functions in the pathway lipid metabolism; phospholipid metabolism. In terms of biological role, catalyzes the transfer of an acyl group from acyl-phosphate (acyl-PO(4)) to glycerol-3-phosphate (G3P) to form lysophosphatidic acid (LPA). This enzyme utilizes acyl-phosphate as fatty acyl donor, but not acyl-CoA or acyl-ACP. The sequence is that of Glycerol-3-phosphate acyltransferase from Synechocystis sp. (strain ATCC 27184 / PCC 6803 / Kazusa).